Reading from the N-terminus, the 556-residue chain is 2-succinyl-5-enolpyruvyl-6-hydroxy-3-cyclohexene-1-carboxylate synthase (556 aa).

This sequence belongs to the TPP enzyme family. MenD subfamily. Homodimer. Mg(2+) is required as a cofactor. Requires Mn(2+) as cofactor. Thiamine diphosphate serves as cofactor.

The enzyme catalyses isochorismate + 2-oxoglutarate + H(+) = 5-enolpyruvoyl-6-hydroxy-2-succinyl-cyclohex-3-ene-1-carboxylate + CO2. It participates in quinol/quinone metabolism; 1,4-dihydroxy-2-naphthoate biosynthesis; 1,4-dihydroxy-2-naphthoate from chorismate: step 2/7. Its pathway is quinol/quinone metabolism; menaquinone biosynthesis. Functionally, catalyzes the thiamine diphosphate-dependent decarboxylation of 2-oxoglutarate and the subsequent addition of the resulting succinic semialdehyde-thiamine pyrophosphate anion to isochorismate to yield 2-succinyl-5-enolpyruvyl-6-hydroxy-3-cyclohexene-1-carboxylate (SEPHCHC). The chain is 2-succinyl-5-enolpyruvyl-6-hydroxy-3-cyclohexene-1-carboxylate synthase from Enterobacter sp. (strain 638).